A 566-amino-acid polypeptide reads, in one-letter code: Phenylalanine--tRNA ligase beta subunit (566 aa).

One can recognise a B5 domain in the interval Tyr287–Pro362. Positions 340, 346, 349, and 350 each coordinate Mg(2+).

It belongs to the phenylalanyl-tRNA synthetase beta subunit family. Type 2 subfamily. Tetramer of two alpha and two beta subunits. Requires Mg(2+) as cofactor.

It localises to the cytoplasm. It catalyses the reaction tRNA(Phe) + L-phenylalanine + ATP = L-phenylalanyl-tRNA(Phe) + AMP + diphosphate + H(+). This Borrelia garinii subsp. bavariensis (strain ATCC BAA-2496 / DSM 23469 / PBi) (Borreliella bavariensis) protein is Phenylalanine--tRNA ligase beta subunit.